The sequence spans 143 residues: Lutropin subunit beta (143 aa).

The N-terminal stretch at methionine 1–threonine 22 is a signal peptide. Cystine bridges form between cysteine 31-cysteine 79, cysteine 45-cysteine 94, cysteine 48-cysteine 132, cysteine 56-cysteine 110, cysteine 60-cysteine 112, and cysteine 115-cysteine 122. A glycan (N-linked (GlcNAc...) asparagine) is linked at asparagine 35.

Belongs to the glycoprotein hormones subunit beta family. As to quaternary structure, heterodimer of a common alpha chain and a unique beta chain which confers biological specificity to thyrotropin, lutropin, follitropin and gonadotropin.

Its subcellular location is the secreted. Promotes spermatogenesis and ovulation by stimulating the testes and ovaries to synthesize steroids. The sequence is that of Lutropin subunit beta (LHB) from Felis catus (Cat).